Consider the following 639-residue polypeptide: Coiled-coil domain-containing protein 27 (639 aa).

The interval 154-176 (YPRKRSEPSDPSPTGSPTVVKKS) is disordered. The stretch at 203–242 (QRFSEMESQMQKKDQEILTLQKEKEALKKQLKNLLRGKGT) forms a coiled coil. Residues 291-385 (ESSKELHVEP…EECHPKRSYS (95 aa)) are disordered. Positions 292–309 (SSKELHVEPGSAIEEKSS) are enriched in basic and acidic residues. A compositionally biased stretch (low complexity) spans 310–320 (EGPPEEAAAAK). 2 stretches are compositionally biased toward acidic residues: residues 336 to 350 (GPEE…EVEG) and 358 to 369 (EGEILVNEEEAS). Residues 370–380 (WELREDEECHP) are compositionally biased toward basic and acidic residues.

The chain is Coiled-coil domain-containing protein 27 (Ccdc27) from Mus musculus (Mouse).